The chain runs to 227 residues: 7-cyano-7-deazaguanine synthase (227 aa).

Residue 8–18 (VSGGADSATVL) coordinates ATP. 4 residues coordinate Zn(2+): cysteine 192, cysteine 202, cysteine 205, and cysteine 208.

Belongs to the QueC family. It depends on Zn(2+) as a cofactor.

It catalyses the reaction 7-carboxy-7-deazaguanine + NH4(+) + ATP = 7-cyano-7-deazaguanine + ADP + phosphate + H2O + H(+). The protein operates within purine metabolism; 7-cyano-7-deazaguanine biosynthesis. Functionally, catalyzes the ATP-dependent conversion of 7-carboxy-7-deazaguanine (CDG) to 7-cyano-7-deazaguanine (preQ(0)). This chain is 7-cyano-7-deazaguanine synthase, found in Rickettsia canadensis (strain McKiel).